A 658-amino-acid chain; its full sequence is UvrABC system protein B (658 aa).

One can recognise a Helicase ATP-binding domain in the interval 25–416 (KSLKNNNHYQ…QKNVAEQIIR (392 aa)). Position 38–45 (38–45 (GVTGSGKT)) interacts with ATP. The short motif at 91-114 (HFDYYQPESYIPRRDLFIEKDSSI) is the Beta-hairpin element. Residues 433-607 (QVQDLFDEIK…ELKLRDDEIK (175 aa)) form the Helicase C-terminal domain. The UVR domain occupies 623-658 (EKIIKELDKKMRERAKNLDFEEAMRLRDEIAQLRTL).

It belongs to the UvrB family. In terms of assembly, forms a heterotetramer with UvrA during the search for lesions. Interacts with UvrC in an incision complex.

It is found in the cytoplasm. The UvrABC repair system catalyzes the recognition and processing of DNA lesions. A damage recognition complex composed of 2 UvrA and 2 UvrB subunits scans DNA for abnormalities. Upon binding of the UvrA(2)B(2) complex to a putative damaged site, the DNA wraps around one UvrB monomer. DNA wrap is dependent on ATP binding by UvrB and probably causes local melting of the DNA helix, facilitating insertion of UvrB beta-hairpin between the DNA strands. Then UvrB probes one DNA strand for the presence of a lesion. If a lesion is found the UvrA subunits dissociate and the UvrB-DNA preincision complex is formed. This complex is subsequently bound by UvrC and the second UvrB is released. If no lesion is found, the DNA wraps around the other UvrB subunit that will check the other stand for damage. This Helicobacter pylori (strain J99 / ATCC 700824) (Campylobacter pylori J99) protein is UvrABC system protein B.